Reading from the N-terminus, the 59-residue chain is Protein translocase subunit SecE (59 aa).

Residues 30–50 (ITVITTVIFFAIFFALIDSGI) traverse the membrane as a helical segment.

The protein belongs to the SecE/SEC61-gamma family. Component of the Sec protein translocase complex. Heterotrimer consisting of SecY, SecE and SecG subunits. The heterotrimers can form oligomers, although 1 heterotrimer is thought to be able to translocate proteins. Interacts with the ribosome. Interacts with SecDF, and other proteins may be involved. Interacts with SecA.

It is found in the cell membrane. Functionally, essential subunit of the Sec protein translocation channel SecYEG. Clamps together the 2 halves of SecY. May contact the channel plug during translocation. The protein is Protein translocase subunit SecE of Bacillus licheniformis.